The primary structure comprises 285 residues: Secreted alkaline triacylglycerol lipase (285 aa).

The first 20 residues, 1–20 (MLFNYQSLLVGVSLISQALS), serve as a signal peptide directing secretion. Ser-159 functions as the Nucleophile in the catalytic mechanism. Catalysis depends on charge relay system residues Asp-215 and His-268.

It belongs to the AB hydrolase superfamily. FaeA family.

It localises to the secreted. It catalyses the reaction a triacylglycerol + H2O = a diacylglycerol + a fatty acid + H(+). In terms of biological role, secreted alkaline lipase that hydrolyzes acylglycerol lipids such as triacylglycerols and consequently releases free fatty acid. Is able to hydrolyze tributyrin (1,2,3-tributyryl-glycerin). The protein is Secreted alkaline triacylglycerol lipase of Penicillium cyclopium.